The primary structure comprises 373 residues: Chaperone protein DnaJ (373 aa).

A J domain is found at 5-70 (DYYEVLGLQK…EKKSNYDQFG (66 aa)). A CR-type zinc finger spans residues 132–214 (GVEKEITVNR…CRGNGNVRKT (83 aa)). 8 residues coordinate Zn(2+): Cys-145, Cys-148, Cys-162, Cys-165, Cys-188, Cys-191, Cys-202, and Cys-205. CXXCXGXG motif repeat units follow at residues 145 to 152 (CEHCNGSG), 162 to 169 (CPTCSGTG), 188 to 195 (CDRCSGTG), and 202 to 209 (CTHCRGNG).

Belongs to the DnaJ family. In terms of assembly, homodimer. The cofactor is Zn(2+).

It localises to the cytoplasm. In terms of biological role, participates actively in the response to hyperosmotic and heat shock by preventing the aggregation of stress-denatured proteins and by disaggregating proteins, also in an autonomous, DnaK-independent fashion. Unfolded proteins bind initially to DnaJ; upon interaction with the DnaJ-bound protein, DnaK hydrolyzes its bound ATP, resulting in the formation of a stable complex. GrpE releases ADP from DnaK; ATP binding to DnaK triggers the release of the substrate protein, thus completing the reaction cycle. Several rounds of ATP-dependent interactions between DnaJ, DnaK and GrpE are required for fully efficient folding. Also involved, together with DnaK and GrpE, in the DNA replication of plasmids through activation of initiation proteins. The polypeptide is Chaperone protein DnaJ (Clostridium botulinum (strain Alaska E43 / Type E3)).